A 95-amino-acid polypeptide reads, in one-letter code: Aspartyl/glutamyl-tRNA(Asn/Gln) amidotransferase subunit C (95 aa).

The protein belongs to the GatC family. Heterotrimer of A, B and C subunits.

It catalyses the reaction L-glutamyl-tRNA(Gln) + L-glutamine + ATP + H2O = L-glutaminyl-tRNA(Gln) + L-glutamate + ADP + phosphate + H(+). The catalysed reaction is L-aspartyl-tRNA(Asn) + L-glutamine + ATP + H2O = L-asparaginyl-tRNA(Asn) + L-glutamate + ADP + phosphate + 2 H(+). Functionally, allows the formation of correctly charged Asn-tRNA(Asn) or Gln-tRNA(Gln) through the transamidation of misacylated Asp-tRNA(Asn) or Glu-tRNA(Gln) in organisms which lack either or both of asparaginyl-tRNA or glutaminyl-tRNA synthetases. The reaction takes place in the presence of glutamine and ATP through an activated phospho-Asp-tRNA(Asn) or phospho-Glu-tRNA(Gln). The protein is Aspartyl/glutamyl-tRNA(Asn/Gln) amidotransferase subunit C of Clostridium botulinum (strain 657 / Type Ba4).